Reading from the N-terminus, the 102-residue chain is Small ribosomal subunit protein uS10 (102 aa).

It belongs to the universal ribosomal protein uS10 family. As to quaternary structure, part of the 30S ribosomal subunit.

Involved in the binding of tRNA to the ribosomes. The polypeptide is Small ribosomal subunit protein uS10 (Levilactobacillus brevis (strain ATCC 367 / BCRC 12310 / CIP 105137 / JCM 1170 / LMG 11437 / NCIMB 947 / NCTC 947) (Lactobacillus brevis)).